A 137-amino-acid chain; its full sequence is DNA-directed RNA polymerase subunit omega (137 aa).

Positions 78-137 are disordered; that stretch reads DEPEPEAVPLLSSSPAAAAVAPQAASGDDNDIQFDRMSEEDLLRGLENLAPPTETEDEGD. Low complexity predominate over residues 84-103; sequence AVPLLSSSPAAAAVAPQAAS. A compositionally biased stretch (basic and acidic residues) spans 110-121; sequence QFDRMSEEDLLR.

The protein belongs to the RNA polymerase subunit omega family. In terms of assembly, the RNAP catalytic core consists of 2 alpha, 1 beta, 1 beta' and 1 omega subunit. When a sigma factor is associated with the core the holoenzyme is formed, which can initiate transcription.

It catalyses the reaction RNA(n) + a ribonucleoside 5'-triphosphate = RNA(n+1) + diphosphate. In terms of biological role, promotes RNA polymerase assembly. Latches the N- and C-terminal regions of the beta' subunit thereby facilitating its interaction with the beta and alpha subunits. The sequence is that of DNA-directed RNA polymerase subunit omega from Methylobacterium sp. (strain 4-46).